Reading from the N-terminus, the 123-residue chain is Large ribosomal subunit protein uL14 (123 aa).

The protein belongs to the universal ribosomal protein uL14 family. Part of the 50S ribosomal subunit. Forms a cluster with proteins L3 and L19. In the 70S ribosome, L14 and L19 interact and together make contacts with the 16S rRNA in bridges B5 and B8.

In terms of biological role, binds to 23S rRNA. Forms part of two intersubunit bridges in the 70S ribosome. The polypeptide is Large ribosomal subunit protein uL14 (Serratia proteamaculans (strain 568)).